A 310-amino-acid chain; its full sequence is Glycine--tRNA ligase alpha subunit (310 aa).

The protein belongs to the class-II aminoacyl-tRNA synthetase family. As to quaternary structure, tetramer of two alpha and two beta subunits.

The protein resides in the cytoplasm. The enzyme catalyses tRNA(Gly) + glycine + ATP = glycyl-tRNA(Gly) + AMP + diphosphate. The sequence is that of Glycine--tRNA ligase alpha subunit from Agrobacterium fabrum (strain C58 / ATCC 33970) (Agrobacterium tumefaciens (strain C58)).